The chain runs to 76 residues: MPYKTKSDLPESVKHVLPSHAQDIYKEAFNSAWDQYKDKEDRRDDASREETAHKVAWAAVKHEYAKGDDDKWHKKS.

It belongs to the ChaB family. As to quaternary structure, monomer.

Functionally, might be a regulator of the sodium-potassium/proton antiporter ChaA. The sequence is that of Putative cation transport regulator ChaB from Escherichia coli O157:H7.